A 199-amino-acid chain; its full sequence is MDADSSSRSPRDTRRRSRQREKMPYFADEVRERDRVRNLPKLKTTQKRTPTPPRERRSRHERPRSRSRTHSPEQSRCQRRLSRSYVRHRSGSRQKTYSSSCSRRRRSRSRSRSRGRSRTPRIITVPVPVPAAEYSYAYGWPPPRPHFNPMYGALPFGMQPRPLNPYFGAYARPPPFRYRAGPFRPHPRYSYRNDRQAPN.

Disordered regions lie at residues methionine 1 to arginine 121 and tyrosine 178 to asparagine 199. Residues arginine 20–arginine 37 are compositionally biased toward basic and acidic residues. 3 stretches are compositionally biased toward basic residues: residues arginine 56–threonine 69, cysteine 77–serine 92, and serine 102–threonine 119.

The protein localises to the nucleus speckle. Functionally, member of the regulatory pathway controlling female somatic sexual differentiation, regulated by Sxl. Activates dsx female-specific splicing by promoting the formation of a splicing enhancer complex which consists of tra, tra2 and sr proteins. The polypeptide is Female-specific protein transformer (tra) (Drosophila virilis (Fruit fly)).